The following is a 251-amino-acid chain: Exotoxin type A (251 aa).

Positions 1–30 (MENNKKVLKKMVFFVLVTFLGLTISQEVFA) are cleaved as a signal peptide. The cysteines at positions 117 and 128 are disulfide-linked.

Belongs to the staphylococcal/streptococcal toxin family.

In terms of biological role, causative agent of the symptoms associated with scarlet fever, have been associated with streptococcal toxic shock-like disease and may play a role in the early events of rheumatic fever. The chain is Exotoxin type A (speA) from Streptococcus pyogenes serotype M18 (strain MGAS8232).